The chain runs to 326 residues: S-methyl-5'-thioadenosine phosphorylase (326 aa).

Phosphate contacts are provided by residues Ser-44, 86–87 (RH), and 119–120 (SA). Met-220 is a substrate binding site. Residue Thr-221 participates in phosphate binding. 244 to 246 (DYD) is a binding site for substrate.

Belongs to the PNP/MTAP phosphorylase family. MTAP subfamily. Homohexamer. Dimer of a homotrimer.

It carries out the reaction S-methyl-5'-thioadenosine + phosphate = 5-(methylsulfanyl)-alpha-D-ribose 1-phosphate + adenine. It functions in the pathway amino-acid biosynthesis; L-methionine biosynthesis via salvage pathway; S-methyl-5-thio-alpha-D-ribose 1-phosphate from S-methyl-5'-thioadenosine (phosphorylase route): step 1/1. Functionally, catalyzes the reversible phosphorylation of S-methyl-5'-thioadenosine (MTA) to adenine and 5-methylthioribose-1-phosphate. Involved in the breakdown of MTA, a major by-product of polyamine biosynthesis. Responsible for the first step in the methionine salvage pathway after MTA has been generated from S-adenosylmethionine. Has broad substrate specificity with 6-aminopurine nucleosides as preferred substrates. This chain is S-methyl-5'-thioadenosine phosphorylase, found in Synechocystis sp. (strain PCC 6803 / GT-S).